A 139-amino-acid polypeptide reads, in one-letter code: UDP-glucose 4-epimerase (139 aa).

NAD(+)-binding positions include 11–12 (YI), 31–36 (DNLCNS), 58–59 (DI), 80–84 (FAGLK), Asn-99, and Ser-124. Substrate is bound at residue Ser-124. Tyr-136 functions as the Proton acceptor in the catalytic mechanism.

The protein belongs to the NAD(P)-dependent epimerase/dehydratase family. Homodimer. Requires NAD(+) as cofactor.

It catalyses the reaction UDP-alpha-D-glucose = UDP-alpha-D-galactose. It functions in the pathway carbohydrate metabolism; galactose metabolism. In terms of biological role, involved in the metabolism of galactose. Catalyzes the conversion of UDP-galactose (UDP-Gal) to UDP-glucose (UDP-Glc) through a mechanism involving the transient reduction of NAD. The protein is UDP-glucose 4-epimerase (galE) of Klebsiella pneumoniae.